Consider the following 197-residue polypeptide: Probable nicotinate-nucleotide adenylyltransferase (197 aa).

The protein belongs to the NadD family.

It carries out the reaction nicotinate beta-D-ribonucleotide + ATP + H(+) = deamido-NAD(+) + diphosphate. It functions in the pathway cofactor biosynthesis; NAD(+) biosynthesis; deamido-NAD(+) from nicotinate D-ribonucleotide: step 1/1. Its function is as follows. Catalyzes the reversible adenylation of nicotinate mononucleotide (NaMN) to nicotinic acid adenine dinucleotide (NaAD). The chain is Probable nicotinate-nucleotide adenylyltransferase from Bordetella parapertussis (strain 12822 / ATCC BAA-587 / NCTC 13253).